A 216-amino-acid polypeptide reads, in one-letter code: Translation initiation factor 6 (216 aa).

This sequence belongs to the eIF-6 family.

Its function is as follows. Binds to the 50S ribosomal subunit and prevents its association with the 30S ribosomal subunit to form the 70S initiation complex. The chain is Translation initiation factor 6 from Thermoplasma acidophilum (strain ATCC 25905 / DSM 1728 / JCM 9062 / NBRC 15155 / AMRC-C165).